A 187-amino-acid chain; its full sequence is Probable nicotinate-nucleotide adenylyltransferase (187 aa).

This sequence belongs to the NadD family.

The catalysed reaction is nicotinate beta-D-ribonucleotide + ATP + H(+) = deamido-NAD(+) + diphosphate. Its pathway is cofactor biosynthesis; NAD(+) biosynthesis; deamido-NAD(+) from nicotinate D-ribonucleotide: step 1/1. Catalyzes the reversible adenylation of nicotinate mononucleotide (NaMN) to nicotinic acid adenine dinucleotide (NaAD). The protein is Probable nicotinate-nucleotide adenylyltransferase of Anaeromyxobacter dehalogenans (strain 2CP-1 / ATCC BAA-258).